The chain runs to 578 residues: Frizzled and smoothened-like protein Q (578 aa).

The N-terminal stretch at 1 to 23 is a signal peptide; the sequence is MKNSFLINILIIYYLFIILFVNS. Residues 24-233 lie on the Extracellular side of the membrane; it reads QDLKLGGSCE…GKTKILDRTN (210 aa). Residues 27–157 enclose the FZ domain; it reads KLGGSCELID…GAPMFPINST (131 aa). Intrachain disulfides connect C32-C95, C41-C88, C79-C128, and C121-C141. Residues N46, N64, N99, and N104 are each glycosylated (N-linked (GlcNAc...) asparagine). N-linked (GlcNAc...) asparagine glycosylation is found at N144, N155, N181, and N233. A helical transmembrane segment spans residues 234 to 254; that stretch reads YTLTSISFITCIFMILTFGVL. The Cytoplasmic portion of the chain corresponds to 255-261; it reads PNKITHR. The chain crosses the membrane as a helical span at residues 262-282; sequence MESILSFACGGCITALSLFIQ. At 283 to 305 the chain is on the extracellular side; the sequence is SRQDNFNCSSDPGRFKSQSDYLC. The N-linked (GlcNAc...) asparagine glycan is linked to N289. The helical transmembrane segment at 306–326 threads the bilayer; that stretch reads LLTGLIFQFGAITSIFWSPMI. The Cytoplasmic segment spans residues 327 to 341; the sequence is AYDFYITSTLGKIRK. A helical transmembrane segment spans residues 342–362; that stretch reads FGLYRIVLWSFIFVLTALPAF. The Extracellular segment spans residues 363-388; sequence GGKYSATVATNCWINSDDGSAWQYVS. A helical transmembrane segment spans residues 389-409; the sequence is FYIPSWCAMGLICLFSILSVI. Residues 410–422 are Cytoplasmic-facing; that stretch reads NVSKMYIQTPNNR. Residues 423-443 traverse the membrane as a helical segment; that stretch reads ILFFNIKILITLLLFLFVLTF. Topologically, residues 444-490 are extracellular; sequence ASSLKFYMEERMDTYFDAIAVWVECIGKGDPSQCELHAPGYDLKALN. Residues 491 to 511 form a helical membrane-spanning segment; the sequence is IVVIGILGFTVFIGYGLDPIV. Topologically, residues 512–578 are cytoplasmic; the sequence is IHIWMESKKF…LKSTEINQQP (67 aa). A compositionally biased stretch (low complexity) spans 544–556; that stretch reads NNNNNETASTSSG. The segment at 544–578 is disordered; sequence NNNNNETASTSSGNERKQTTVKMSNLKSTEINQQP. Residues 563 to 578 show a composition bias toward polar residues; the sequence is TVKMSNLKSTEINQQP.

The protein belongs to the G-protein coupled receptor Fz/Smo family.

The protein localises to the membrane. The protein is Frizzled and smoothened-like protein Q (fslQ) of Dictyostelium discoideum (Social amoeba).